The following is a 365-amino-acid chain: WAT1-related protein At1g01070 (365 aa).

10 helical membrane passes run 14-34, 46-66, 83-103, 107-127, 139-159, 189-209, 221-241, 255-275, 285-305, and 310-330; these read YSPV…NALV, VIGA…AYVL, FVSG…GLSY, TVSC…ALIF, AGML…FLTF, WLLG…WMLF, YSST…LSLY, FVIT…TVAT, VFAS…DFLI, and LYLG…MFLW. Residues 27–157 form the EamA 1 domain; it reads MGSVNALVKK…LICISGALFL (131 aa). One can recognise an EamA 2 domain in the interval 223–329; sequence STCLMSIFAA…VTITGLYMFL (107 aa). Residues 340-356 are compositionally biased toward polar residues; the sequence is TALSSGMDNEAQYTTPN. Residues 340 to 365 are disordered; it reads TALSSGMDNEAQYTTPNKDNDSKSPV.

This sequence belongs to the drug/metabolite transporter (DMT) superfamily. Plant drug/metabolite exporter (P-DME) (TC 2.A.7.4) family.

The protein resides in the membrane. The chain is WAT1-related protein At1g01070 from Arabidopsis thaliana (Mouse-ear cress).